Reading from the N-terminus, the 469-residue chain is Putative dipeptidase MW1694 (469 aa).

His-84 contributes to the Zn(2+) binding site. Asp-86 is a catalytic residue. Asp-115 provides a ligand contact to Zn(2+). Catalysis depends on Glu-149, which acts as the Proton acceptor. Residues Glu-150, Asp-173, and His-440 each contribute to the Zn(2+) site.

This sequence belongs to the peptidase M20A family. It depends on Zn(2+) as a cofactor.

In Staphylococcus aureus (strain MW2), this protein is Putative dipeptidase MW1694.